A 123-amino-acid polypeptide reads, in one-letter code: WAP four-disulfide core domain protein 5 (123 aa).

The signal sequence occupies residues 1 to 24 (MRIQSLLLLGVLLAVGSQLPAAFG). WAP domains follow at residues 27 to 73 (KGEK…CVPR) and 74 to 121 (ISVK…RDPA). 8 disulfide bridges follow: cysteine 34–cysteine 62, cysteine 41–cysteine 66, cysteine 49–cysteine 61, cysteine 55–cysteine 70, cysteine 81–cysteine 109, cysteine 88–cysteine 113, cysteine 96–cysteine 108, and cysteine 102–cysteine 117.

It is found in the secreted. In terms of biological role, putative acid-stable proteinase inhibitor. In Callithrix jacchus (White-tufted-ear marmoset), this protein is WAP four-disulfide core domain protein 5 (WFDC5).